The following is a 494-amino-acid chain: MRIRRILYFYGNLPNTYTANVLRRLAFSCWHTHQLPPTISATRSCFSAMAEMQDSHNEMELYSPNPEVRGMTCLNRDAFDKTIHVPVIKIKKEIINRLMKSLKHRLIQRPSLKRVIEDPKDDVNKLVLLDPYKVKSIDSFDESDHVLFKQFDVNPQVSQYELQLTYENFKCEEILRAVLPKGQDVTSGFSRVGHIAHMNLRDHQLPYKNVIGQVILDKNPGITSVVNKTNTIDSTYRNFQMEVLAGEENMITKVKENYVTYEFDFSKVYWNPRLGTEHNRIIGFLKARDVLFDVFAGVGPFAVPAAKKNCTVYANDLNPESYKWLLHNCKLNKVEKRVQAFNTDGRDFIKTTIKKELLKYADMPSAEEKPSLHIAMNLPALAVEFLDAFKNLLEEEPCNSFILPTIHCYSFSKDDDPLQDVKARAESFLGTTLEDCSMHLVRNVAPNKEMVCISFKLPSSVLFQRLSDTGEPESKRPRTAEAFPLPHVQQSRNS.

The N-terminal 32 residues, 1 to 32, are a transit peptide targeting the mitochondrion; that stretch reads MRIRRILYFYGNLPNTYTANVLRRLAFSCWHT. Residues His-278, 316–317, 344–345, and Asn-377 contribute to the S-adenosyl-L-methionine site; these read DL and DG. Positions 468-494 are disordered; that stretch reads DTGEPESKRPRTAEAFPLPHVQQSRNS.

This sequence belongs to the class I-like SAM-binding methyltransferase superfamily. TRM5/TYW2 family. In terms of assembly, monomer.

The protein localises to the mitochondrion matrix. It localises to the nucleus. The protein resides in the cytoplasm. The catalysed reaction is guanosine(37) in tRNA + S-adenosyl-L-methionine = N(1)-methylguanosine(37) in tRNA + S-adenosyl-L-homocysteine + H(+). In terms of biological role, involved in mitochondrial tRNA methylation. Specifically methylates the N1 position of guanosine-37 in various tRNAs. Methylation is not dependent on the nature of the nucleoside 5' of the target nucleoside. This is the first step in the biosynthesis of wybutosine (yW), a modified base adjacent to the anticodon of tRNAs and required for accurate decoding. In Xenopus tropicalis (Western clawed frog), this protein is tRNA (guanine(37)-N(1))-methyltransferase (trmt5).